The chain runs to 267 residues: Pro-opiomelanocortin (267 aa).

Residues 1 to 26 (MPRSCCSRSGALLLALLLQASMEVRG) form the signal peptide. Cys-28 and Cys-50 form a disulfide bridge. Thr-71 carries O-linked (HexNAc...) threonine glycosylation. A Phenylalanine amide modification is found at Phe-87. Disordered stretches follow at residues 88 to 175 (GRRN…FPLE), 181 to 200 (TGQR…DGAG), and 222 to 241 (RMEH…GGFM). Residue Asn-91 is glycosylated (N-linked (GlcNAc...) asparagine). Residues 121-145 (PEPRSDGAKPGPREGKRSYSMEHFR) are compositionally biased toward basic and acidic residues. At Glu-134 the chain carries Glutamic acid 1-amide. Position 138 is an N-acetylserine; in Corticotropin (Ser-138). The residue at position 150 (Val-150) is a Valine amide. Ser-168 carries the phosphoserine modification. The segment covering 222-237 (RMEHFRWGSPPKDKRY) has biased composition (basic and acidic residues).

The protein belongs to the POMC family. Post-translationally, specific enzymatic cleavages at paired basic residues yield the different active peptides. O-glycosylated; reducing sugar is probably N-acetylgalactosamine. In terms of tissue distribution, ACTH and MSH are produced by the pituitary gland.

It is found in the secreted. In terms of biological role, stimulates the adrenal glands to release cortisol. Its function is as follows. Anorexigenic peptide. Increases the pigmentation of skin by increasing melanin production in melanocytes. Increases the pigmentation of skin by increasing melanin production in melanocytes. Functionally, endogenous orexigenic opiate. In terms of biological role, endogenous opiate. The polypeptide is Pro-opiomelanocortin (POMC) (Homo sapiens (Human)).